A 314-amino-acid polypeptide reads, in one-letter code: Probable manganese-dependent inorganic pyrophosphatase (314 aa).

Mn(2+)-binding residues include His-10, Asp-14, Asp-16, Asp-80, His-102, and Asp-154.

This sequence belongs to the PPase class C family. It depends on Mn(2+) as a cofactor.

It is found in the cytoplasm. It catalyses the reaction diphosphate + H2O = 2 phosphate + H(+). The polypeptide is Probable manganese-dependent inorganic pyrophosphatase (ppaC) (Lactococcus lactis subsp. lactis (strain IL1403) (Streptococcus lactis)).